A 206-amino-acid chain; its full sequence is MPSRRRTLLKVIILGDSGVGKTSLMNQYVNKKFSNQYKATIGADFLTKEVQFEDRLFTLQIWDTAGQERFQSLGVAFYRGADCCVLVYDVNSVKSFDNLNNWREEFLIQANPSDPENFPFVVIGNKIDIDGGNSRVVSEKKARAWCAAKGNIPYFETSAKEGINVEEAFQTIAKDALKSGEEEELYLPDTIDVGNSSQPRSTGCEC.

GTP is bound by residues 15 to 22, 63 to 67, and 125 to 128; these read GDSGVGKT, DTAGQ, and NKID. S-geranylgeranyl cysteine attachment occurs at residues cysteine 204 and cysteine 206. At cysteine 206 the chain carries Cysteine methyl ester.

This sequence belongs to the small GTPase superfamily. Rab family.

It is found in the cell membrane. Its function is as follows. Protein transport. Probably involved in vesicular traffic. This chain is Ras-related protein Rab7, found in Pisum sativum (Garden pea).